Reading from the N-terminus, the 125-residue chain is Secreted RxLR effector protein 22 (125 aa).

An N-terminal signal peptide occupies residues Met-1–Gly-26. The disordered stretch occupies residues Ser-21–Thr-66. A RxLR-dEER motif is present at residues Arg-32 to Arg-50.

This sequence belongs to the RxLR effector family.

Its subcellular location is the secreted. The protein localises to the host nucleus. Effector that acts as a broad suppressor of cell death to interrupt plant immunity. Inhibits cell death induced by cell death-inducing proteins, including the PAMP elicitor INF1 from P.infestans. The protein is Secreted RxLR effector protein 22 of Plasmopara viticola (Downy mildew of grapevine).